Here is a 1457-residue protein sequence, read N- to C-terminus: Bridge-like lipid transfer protein family member 3B (1457 aa).

The region spanning 3–94 (GIIKKQILKH…DKVIMEMSTC (92 aa)) is the Chorein N-terminal domain. Disordered stretches follow at residues 267-295 (STEQRKSMAPEPTQSSTVTSSAQHVKTPQ) and 409-449 (DRNL…PQPS). A compositionally biased stretch (polar residues) spans 278–295 (PTQSSTVTSSAQHVKTPQ). Serine 414, serine 418, serine 774, and serine 934 each carry phosphoserine. Disordered regions lie at residues 975–1038 (SEDE…TGKG), 1056–1099 (ASLS…LSVS), and 1145–1183 (SNTSCQSPAESVNTSANTQTCGEASPEAVSTNSEGTQEN). The span at 980-995 (SGLSHKSGSGEMTSEG) shows a compositional bias: polar residues. Phosphoserine is present on serine 1008. The segment covering 1145-1180 (SNTSCQSPAESVNTSANTQTCGEASPEAVSTNSEGT) has biased composition (polar residues). Residues 1410–1455 (ANFLDITREQLMEENECLRQRLAQAKMELAEAHSARDELLHQMKRM) are a coiled coil.

Homodimer (via N-terminus). Associates with the Golgi-associated retrograde protein (GARP) complex. Interacts with GARP complex component VPS52. Interacts (via C-terminal coiled-coil domain) with STX6.

The protein resides in the cytoplasm. It localises to the cytosol. Its subcellular location is the early endosome. Its function is as follows. Tube-forming lipid transport protein which mediates the transfer of lipids between membranes at organelle contact sites. Required for retrograde traffic of vesicle clusters in the early endocytic pathway to the Golgi complex. In Mus musculus (Mouse), this protein is Bridge-like lipid transfer protein family member 3B (Bltp3b).